The primary structure comprises 309 residues: Malate dehydrogenase (309 aa).

Residues Gly10–Gly15 and Asp34 each bind NAD(+). Arg83 and Arg89 together coordinate substrate. Residues Asn96 and Val119–Asn121 contribute to the NAD(+) site. Asn121 and Arg152 together coordinate substrate. Catalysis depends on His176, which acts as the Proton acceptor.

The protein belongs to the LDH/MDH superfamily. MDH type 3 family.

It carries out the reaction (S)-malate + NAD(+) = oxaloacetate + NADH + H(+). Its function is as follows. Catalyzes the reversible oxidation of malate to oxaloacetate. This is Malate dehydrogenase from Heliobacterium modesticaldum (strain ATCC 51547 / Ice1).